An 89-amino-acid chain; its full sequence is Acylphosphatase (89 aa).

One can recognise an Acylphosphatase-like domain in the interval 3–89 (ALEIYVSGNV…ENYESFEVAY (87 aa)). Residues R18 and N36 contribute to the active site.

The protein belongs to the acylphosphatase family.

It carries out the reaction an acyl phosphate + H2O = a carboxylate + phosphate + H(+). In Archaeoglobus fulgidus (strain ATCC 49558 / DSM 4304 / JCM 9628 / NBRC 100126 / VC-16), this protein is Acylphosphatase (acyP).